Consider the following 487-residue polypeptide: 4-alpha-glucanotransferase (487 aa).

This sequence belongs to the disproportionating enzyme family.

It is found in the cytoplasm. The catalysed reaction is Transfers a segment of a (1-&gt;4)-alpha-D-glucan to a new position in an acceptor, which may be glucose or a (1-&gt;4)-alpha-D-glucan.. Catalyzes a disproportionation reaction in which single or multiple glucose units from oligosaccharides are transferred to the 4-hydroxyl group of acceptor sugars. Glucose, maltose and maltotriose can act as acceptor, whereas of the three only maltotriose can act as donor. This Clostridium butyricum protein is 4-alpha-glucanotransferase (malQ).